A 137-amino-acid polypeptide reads, in one-letter code: Large ribosomal subunit protein uL16 (137 aa).

The protein belongs to the universal ribosomal protein uL16 family. Part of the 50S ribosomal subunit.

In terms of biological role, binds 23S rRNA and is also seen to make contacts with the A and possibly P site tRNAs. This chain is Large ribosomal subunit protein uL16, found in Psychrobacter cryohalolentis (strain ATCC BAA-1226 / DSM 17306 / VKM B-2378 / K5).